The following is a 1687-amino-acid chain: Muscle calcium channel subunit alpha-1 (1687 aa).

Positions 1–33 (MDDAVCPTETDNVQNKQKATTPKRTQRRGGKQQ) are disordered. Residues 1-61 (MDDAVCPTET…IFCIKIVDSK (61 aa)) lie on the Cytoplasmic side of the membrane. Positions 9-23 (ETDNVQNKQKATTPK) are enriched in polar residues. An I repeat occupies 48 to 330 (NPLRIFCIKI…LILGVLSGEF (283 aa)). Residues 62-80 (LFEYFILLTIFANCVALAV) form a helical membrane-spanning segment. Residues 81–99 (YTPYPSGDSNITNQMLEKI) are Extracellular-facing. Asn90 carries an N-linked (GlcNAc...) asparagine glycan. Residues 100-117 (EYIFLVIFTSECVMKIIA) form a helical membrane-spanning segment. Over 118-130 (YGFVLHTGSYLRN) the chain is Cytoplasmic. The helical transmembrane segment at 131 to 145 (GWNFLDFFIVVIGMI) threads the bilayer. Topologically, residues 146 to 157 (STALSNLVKEGF) are extracellular. The chain crosses the membrane as a helical span at residues 158–176 (DVKALRAFRVLRPLRLVSG). Residues 177–196 (VPSLQVVLNSILKAMIPLLH) are Cytoplasmic-facing. Residues 197–216 (IALLVLFVIIIYAIIGLELF) traverse the membrane as a helical segment. Residues 217–302 (SGKLHKTCRH…SIQDAMGSSW (86 aa)) lie on the Extracellular side of the membrane. Glu285 serves as a coordination point for Ca(2+). Residues 303–327 (EWIYFVSMVILGAFFVMNLILGVLS) form a helical membrane-spanning segment. The Cytoplasmic segment spans residues 328-434 (GEFSKERTKA…RACRKAVKSQ (107 aa)). An II repeat occupies 420–667 (NRRIRRACRK…VFLAIAVDNL (248 aa)). Residues 435-454 (AFYWLIILLVFLNTGVLATE) traverse the membrane as a helical segment. At 455–467 (HYRQPIWLDQFQE) the chain is on the extracellular side. A helical membrane pass occupies residues 468–487 (YTNIFFIALFTCEMILKMYS). The Cytoplasmic segment spans residues 488-496 (LGFQGYFVS). Residues 497 to 515 (LFNRFDCFVVIGSISEMVL) traverse the membrane as a helical segment. At 516–525 (TSSELMAPLG) the chain is on the extracellular side. Residues 526–544 (VSVLRCVRLLRVFKVTKYW) form a helical membrane-spanning segment. Residues 545-563 (HSLSNLVASLLNSIQSIAS) lie on the Cytoplasmic side of the membrane. The chain crosses the membrane as a helical span at residues 564-583 (LLLLLFLFIVIFGLLGMQVF). Topologically, residues 584-639 (GGRFTFKPEEEKPRSNFDSFYQSLLTVFQILTGEDWNVVMYDGIRAYGGVFSFGIV) are extracellular. Glu617 is a binding site for Ca(2+). The helical transmembrane segment at 640 to 664 (ACIYYIILFICGNYILLNVFLAIAV) threads the bilayer. Residues 665–785 (DNLADADSLS…TNRFRIFCHR (121 aa)) are Cytoplasmic-facing. The stretch at 777–1059 (NRFRIFCHRL…IFVGFVIVTF (283 aa)) is one III repeat. Residues 786–809 (LCNHSNFGNFILCCIMFSSAMLAA) form a helical membrane-spanning segment. Residues 810–826 (ENPLKADASRNIVLNKF) lie on the Extracellular side of the membrane. A helical transmembrane segment spans residues 827-846 (DYFFTAVFTIELVLKLISYG). Over 847-854 (FVLHDGAF) the chain is Cytoplasmic. The chain crosses the membrane as a helical span at residues 855–877 (CRSAFNLLDLLVVCVSLISIFFN). Over 878–885 (SNAISVVK) the chain is Extracellular. Residues 886–900 (ILRVLRVLRPLRAIN) traverse the membrane as a helical segment. At 901–921 (RAKGLKHVVQCVIVAVKTIGN) the chain is on the cytoplasmic side. The helical transmembrane segment at 922 to 941 (IVLVTCLLQFMFAVIGVQLF) threads the bilayer. Over 942 to 1030 (KGKFFSCSDG…NGGPIYNFRP (89 aa)) the chain is Extracellular. Residues 979–1068 (REWKNNKFHF…FQNEGEQEYK (90 aa)) are dihydropyridine binding. Glu1005 is a binding site for Ca(2+). A helical transmembrane segment spans residues 1031-1055 (IVAAYYIIYIIIIAFFMVNIFVGFV). At 1056 to 1110 (IVTFQNEGEQEYKNCELDKNQRNCIEFALKAKPVRRYIPKHSIQYKVWWFVTSSS) the chain is on the cytoplasmic side. The IV repeat unit spans residues 1096-1370 (HSIQYKVWWF…LFVAVIMDNF (275 aa)). A helical membrane pass occupies residues 1111 to 1129 (FEYSIFVLIMINTVTLAMK). Over 1130–1143 (FYKQPEYYSEILDA) the chain is Extracellular. A helical transmembrane segment spans residues 1144-1163 (LNMIFTAVFSLEFIFKLAAF). At 1164–1172 (RFKNYFGDA) the chain is on the cytoplasmic side. Residues 1173-1191 (WNTFDFIIVLGSFIDIVYS) traverse the membrane as a helical segment. Residues 1192-1219 (EIKTKEQALATCDGQSCNKAKGGSTLIS) lie on the Extracellular side of the membrane. A helical membrane pass occupies residues 1220–1238 (INFFRLFRVMRLVKLLSKG). Residues 1239 to 1257 (EGIRTLLWTFIKSFQALPY) lie on the Cytoplasmic side of the membrane. Residues 1258–1277 (VALLIVMLFFIYAVIGMQVF) traverse the membrane as a helical segment. Over 1278–1343 (GKIMLEEGTS…AVNNCGSSIA (66 aa)) the chain is Extracellular. Positions 1327 to 1389 (KCDPESDAVN…LGPHHLDEFI (63 aa)) are dihydropyridine binding. The segment at 1337-1378 (NCGSSIAFPYFISFYVLCSFLIINLFVAVIMDNFDYLTRDWS) is phenylalkylamine binding. Residues 1344–1362 (FPYFISFYVLCSFLIINLF) traverse the membrane as a helical segment. The Cytoplasmic portion of the chain corresponds to 1363 to 1687 (VAVIMDNFDY…PKSKDKDEEF (325 aa)).

It belongs to the calcium channel alpha-1 subunit (TC 1.A.1.11) family. Predominantly expressed in the larval body wall musculature. In adults, highest expression in thorax followed by head and at a lower extent by abdomen.

Its subcellular location is the membrane. Functionally, voltage-sensitive calcium channels (VSCC) mediate the entry of calcium ions into excitable cells and are also involved in a variety of calcium-dependent processes, including muscle contraction, hormone or neurotransmitter release, gene expression, cell motility, cell division and cell death. MDL-alpha1 encodes a dihydropyridine- and diltiazem-sensitive current in larval body wall muscle. In Musca domestica (House fly), this protein is Muscle calcium channel subunit alpha-1.